A 75-amino-acid polypeptide reads, in one-letter code: Tautomerase PptA (75 aa).

The active-site Proton acceptor; via imino nitrogen is P2.

The protein belongs to the 4-oxalocrotonate tautomerase family. PptA subfamily. In terms of assembly, homodimer.

Its subcellular location is the cytoplasm. In Escherichia coli O139:H28 (strain E24377A / ETEC), this protein is Tautomerase PptA.